Here is a 512-residue protein sequence, read N- to C-terminus: Glutamyl-tRNA(Gln) amidotransferase subunit A (512 aa).

Active-site charge relay system residues include lysine 82 and serine 157. Serine 181 functions as the Acyl-ester intermediate in the catalytic mechanism.

Belongs to the amidase family. GatA subfamily. In terms of assembly, heterotrimer of A, B and C subunits.

It catalyses the reaction L-glutamyl-tRNA(Gln) + L-glutamine + ATP + H2O = L-glutaminyl-tRNA(Gln) + L-glutamate + ADP + phosphate + H(+). Functionally, allows the formation of correctly charged Gln-tRNA(Gln) through the transamidation of misacylated Glu-tRNA(Gln) in organisms which lack glutaminyl-tRNA synthetase. The reaction takes place in the presence of glutamine and ATP through an activated gamma-phospho-Glu-tRNA(Gln). The polypeptide is Glutamyl-tRNA(Gln) amidotransferase subunit A (Bordetella pertussis (strain Tohama I / ATCC BAA-589 / NCTC 13251)).